The sequence spans 417 residues: Hydroxysqualene dehydroxylase (417 aa).

It belongs to the HpnE family.

It carries out the reaction squalene + FAD + H2O + H(+) = hydroxysqualene + FADH2. The protein operates within secondary metabolite biosynthesis; hopanoid biosynthesis. Functionally, involved in the biosynthesis of the hopanoid precursor squalene (SQ) from farnesyl diphosphate (FPP). Catalyzes the third (last) step, the reduction of hydroxysqualene (HSQ) to SQ. The polypeptide is Hydroxysqualene dehydroxylase (Sinorhizobium fredii (strain NBRC 101917 / NGR234)).